A 165-amino-acid polypeptide reads, in one-letter code: Deoxyuridine 5'-triphosphate nucleotidohydrolase (165 aa).

Belongs to the dUTPase family. Homotrimer. Requires Mg(2+) as cofactor.

The protein localises to the host cytoplasm. Its subcellular location is the virion. The catalysed reaction is dUTP + H2O = dUMP + diphosphate + H(+). Functionally, the viral dUTPase may play a role in lowering the dUTP concentration in natural infections to minimize misincorporation of deoxyuridine into the viral DNA and ensure the fidelity of genome replication. This is Deoxyuridine 5'-triphosphate nucleotidohydrolase from African swine fever virus (isolate Tick/South Africa/Pretoriuskop Pr4/1996) (ASFV).